A 327-amino-acid chain; its full sequence is ABC transporter periplasmic-binding protein YphF (327 aa).

The N-terminal stretch at 1-26 (MPTKMRTTRNLLLMATLLGSALFARA) is a signal peptide.

Belongs to the bacterial solute-binding protein 2 family.

Its subcellular location is the periplasm. Functionally, probably part of the binding-protein-dependent transport system YphDEF. In Escherichia coli (strain K12), this protein is ABC transporter periplasmic-binding protein YphF (yphF).